Here is a 168-residue protein sequence, read N- to C-terminus: MESIVLIGFMGAGKTTIGQSLANKLKMPHLDLDTALIEKIGRSIPDYFEKYGEAAFREQETQLLKELSKNTAVLSTGGGIVVGPENRSLLKSFQQVIYLHATPEELLKRITEDTENQRPLAIERSSKEIITLFESRKNFYEECAKMTIDTTNRSPEEIINEILQQLKE.

11–16 (GAGKTT) is an ATP binding site. Threonine 15 is a Mg(2+) binding site. Substrate contacts are provided by aspartate 33, arginine 57, and glycine 78. Arginine 118 serves as a coordination point for ATP. Arginine 136 lines the substrate pocket. ATP is bound at residue arginine 153.

This sequence belongs to the shikimate kinase family. As to quaternary structure, monomer. It depends on Mg(2+) as a cofactor.

The protein resides in the cytoplasm. The enzyme catalyses shikimate + ATP = 3-phosphoshikimate + ADP + H(+). Its pathway is metabolic intermediate biosynthesis; chorismate biosynthesis; chorismate from D-erythrose 4-phosphate and phosphoenolpyruvate: step 5/7. Catalyzes the specific phosphorylation of the 3-hydroxyl group of shikimic acid using ATP as a cosubstrate. This is Shikimate kinase from Enterococcus faecalis (strain ATCC 700802 / V583).